The chain runs to 201 residues: 3-isopropylmalate dehydratase small subunit (201 aa).

The protein belongs to the LeuD family. LeuD type 1 subfamily. In terms of assembly, heterodimer of LeuC and LeuD.

It catalyses the reaction (2R,3S)-3-isopropylmalate = (2S)-2-isopropylmalate. It functions in the pathway amino-acid biosynthesis; L-leucine biosynthesis; L-leucine from 3-methyl-2-oxobutanoate: step 2/4. Functionally, catalyzes the isomerization between 2-isopropylmalate and 3-isopropylmalate, via the formation of 2-isopropylmaleate. This chain is 3-isopropylmalate dehydratase small subunit, found in Shewanella putrefaciens (strain CN-32 / ATCC BAA-453).